Reading from the N-terminus, the 89-residue chain is uncharacterized protein (89 aa).

An N-terminal signal peptide occupies residues 1 to 27 (MKKAAAVLLSLGLVFGFSYGAGHVAEA).

This is an uncharacterized protein from Bacillus subtilis (strain 168).